We begin with the raw amino-acid sequence, 291 residues long: Urease accessory protein UreD (291 aa).

This sequence belongs to the UreD family. As to quaternary structure, ureD, UreF and UreG form a complex that acts as a GTP-hydrolysis-dependent molecular chaperone, activating the urease apoprotein by helping to assemble the nickel containing metallocenter of UreC. The UreE protein probably delivers the nickel.

The protein resides in the cytoplasm. In terms of biological role, required for maturation of urease via the functional incorporation of the urease nickel metallocenter. This Acinetobacter baumannii (strain ACICU) protein is Urease accessory protein UreD.